The following is a 288-amino-acid chain: T-lymphocyte activation antigen CD80 (288 aa).

The N-terminal stretch at 1–34 (MGHTRRQGTSPSKCPYLNFFQLLVLAGLSHFCSG) is a signal peptide. The region spanning 35-135 (VIHVTKEVKE…FKREHLAEVT (101 aa)) is the Ig-like V-type domain. The Extracellular portion of the chain corresponds to 35-242 (VIHVTKEVKE…TTKQEHFPDN (208 aa)). 2 disulfide bridges follow: Cys-50/Cys-116 and Cys-162/Cys-216. Asn-53, Asn-89, Asn-98, Asn-186, Asn-207, Asn-211, Asn-226, and Asn-232 each carry an N-linked (GlcNAc...) asparagine glycan. The Ig-like C2-type domain maps to 145–230 (PSISDFEIPT…GHLRVNQTFN (86 aa)). Residues 243–263 (LLPSWAITLISVNGIFVICCL) traverse the membrane as a helical segment. S-palmitoyl cysteine attachment occurs at residues Cys-261, Cys-262, Cys-266, and Cys-271. Residues 264–288 (TYCFAPRCRERRRNERLRRESVRPV) are Cytoplasmic-facing. Ser-284 carries the phosphoserine modification.

Homodimer. Interacts with CTLA4; this interaction inhibits T-cell activation. Interacts with PDL1/CD274; this interaction blocks PDL1/PDCD1 binding and thus PDL1/CD274 inhibitory function. Interacts with CD28. As to quaternary structure, (Microbial infection) Interacts with adenovirus subgroup B fiber proteins. In terms of assembly, (Microbial infection) Interacts with Orthopoxvirus OPG038/M2 protein, inhibiting the interaction with CTLA4/CD152. In terms of processing, palmitoylated by ZDHHC20; palmitoylation protects CD80 from ubiquitin-mediated degradation, regulating the protein stability, and ensures its accurate plasma membrane localization. Expressed on activated B-cells, macrophages and dendritic cells.

It localises to the cell membrane. In terms of biological role, costimulatory molecule that belongs to the immunoglobulin superfamily that plays an important role in T-lymphocyte activation. Acts as the primary auxiliary signal augmenting the MHC/TCR signal in naive T-cells together with the CD28 receptor which is constitutively expressed on the cell surface of T-cells. In turn, activates different signaling pathways such as NF-kappa-B or MAPK leading to the production of different cytokines. In addition, CD28/CD80 costimulatory signal stimulates glucose metabolism and ATP synthesis of T-cells by activating the PI3K/Akt signaling pathway. Also acts as a regulator of PDL1/PDCD1 interactions to limit excess engagement of PDL1 and its inhibitory role in immune responses. Expressed on B-cells, plays a critical role in regulating interactions between B-cells and T-cells in both early and late germinal center responses, which are crucial for the generation of effective humoral immune responses. (Microbial infection) Acts as a receptor for adenovirus subgroup B. This is T-lymphocyte activation antigen CD80 (CD80) from Homo sapiens (Human).